The following is a 225-amino-acid chain: Uracil-DNA glycosylase (225 aa).

The Proton acceptor role is filled by Asp65.

Belongs to the uracil-DNA glycosylase (UDG) superfamily. UNG family.

It localises to the cytoplasm. It catalyses the reaction Hydrolyzes single-stranded DNA or mismatched double-stranded DNA and polynucleotides, releasing free uracil.. Functionally, excises uracil residues from the DNA which can arise as a result of misincorporation of dUMP residues by DNA polymerase or due to deamination of cytosine. The chain is Uracil-DNA glycosylase from Bacillus cereus (strain G9842).